The primary structure comprises 165 residues: Small ribosomal subunit protein uS5 (165 aa).

An S5 DRBM domain is found at 10–73 (LKEKVVFINR…EDAKKHLVEV (64 aa)).

This sequence belongs to the universal ribosomal protein uS5 family. In terms of assembly, part of the 30S ribosomal subunit. Contacts proteins S4 and S8.

In terms of biological role, with S4 and S12 plays an important role in translational accuracy. Located at the back of the 30S subunit body where it stabilizes the conformation of the head with respect to the body. This chain is Small ribosomal subunit protein uS5, found in Clostridium novyi (strain NT).